Reading from the N-terminus, the 326-residue chain is NADH-quinone oxidoreductase subunit H (326 aa).

Transmembrane regions (helical) follow at residues 11 to 31, 81 to 101, 114 to 134, 154 to 174, 186 to 206, 237 to 257, 265 to 285, and 302 to 322; these read ILLS…CGAF, VIFT…FAIV, IGIL…LFAG, LSYE…AGSF, LWNV…GVAV, FFVG…TLFF, LPPF…FILI, and WKVC…VILW.

The protein belongs to the complex I subunit 1 family. NDH-1 is composed of 13 different subunits. Subunits NuoA, H, J, K, L, M, N constitute the membrane sector of the complex.

The protein resides in the cell inner membrane. The catalysed reaction is a quinone + NADH + 5 H(+)(in) = a quinol + NAD(+) + 4 H(+)(out). Its function is as follows. NDH-1 shuttles electrons from NADH, via FMN and iron-sulfur (Fe-S) centers, to quinones in the respiratory chain. The immediate electron acceptor for the enzyme in this species is believed to be ubiquinone. Couples the redox reaction to proton translocation (for every two electrons transferred, four hydrogen ions are translocated across the cytoplasmic membrane), and thus conserves the redox energy in a proton gradient. This subunit may bind ubiquinone. The chain is NADH-quinone oxidoreductase subunit H from Cronobacter sakazakii (strain ATCC BAA-894) (Enterobacter sakazakii).